Reading from the N-terminus, the 309-residue chain is Olfactory receptor 7A17 (309 aa).

Residues 1-25 are Extracellular-facing; that stretch reads MEPENDTGISEFVLLGLSEEPELQP. A glycan (N-linked (GlcNAc...) asparagine) is linked at asparagine 5. The chain crosses the membrane as a helical span at residues 26–46; the sequence is FLFGLFLSMYLVTVLGNLLII. The Cytoplasmic segment spans residues 47–54; it reads LATISDSH. Residues 55–75 traverse the membrane as a helical segment; sequence LHTPMYFFLSNLSFADICFIS. Topologically, residues 76–99 are extracellular; sequence TTIPKMLINIQTQSRVITYAGCIT. An intrachain disulfide couples cysteine 97 to cysteine 189. The helical transmembrane segment at 100–120 threads the bilayer; the sequence is QMCFFVLFGGLDSLLLAVMAY. Topologically, residues 121-139 are cytoplasmic; it reads DRFVAICHPLHYTVIMNPR. Residues 140–160 traverse the membrane as a helical segment; the sequence is LCGLLVLASWMIAALNSLSQS. The Extracellular segment spans residues 161–197; sequence LMVLWLSFCTDLEIPHFFCELNQVIHLACSDTFLNDM. A helical transmembrane segment spans residues 198–217; it reads GMYFAAGLLAGGPLVGILCS. Topologically, residues 218 to 237 are cytoplasmic; it reads YSKIVSSIRAISSAQGKYKA. A helical membrane pass occupies residues 238-258; sequence FSTCASHLSVVSLFCCTGLGV. The Extracellular portion of the chain corresponds to 259–271; that stretch reads YLTSAATHNSHTS. A helical membrane pass occupies residues 272-292; the sequence is ATASVMYTVATPMLNPFIYSL. Topologically, residues 293 to 309 are cytoplasmic; sequence RNKDIKRALKMSFRGKQ.

Belongs to the G-protein coupled receptor 1 family.

Its subcellular location is the cell membrane. Functionally, odorant receptor. In Homo sapiens (Human), this protein is Olfactory receptor 7A17 (OR7A17).